The primary structure comprises 2291 residues: Protein Ycf2 B (2291 aa).

1642–1649 (GSIGTGRS) is a binding site for ATP.

Belongs to the Ycf2 family.

The protein localises to the plastid. The protein resides in the chloroplast stroma. Probable ATPase of unknown function. Its presence in a non-photosynthetic plant (Epifagus virginiana) and experiments in tobacco indicate that it has an essential function which is probably not related to photosynthesis. The protein is Protein Ycf2 B (ycf2-B) of Atropa belladonna (Belladonna).